Reading from the N-terminus, the 188-residue chain is Phosphatidylcholine-sterol acyltransferase (188 aa).

An N-linked (GlcNAc...) asparagine glycan is attached at Asn-20. His-169 acts as the Charge relay system in catalysis.

The protein belongs to the AB hydrolase superfamily. Lipase family. As to expression, detected in blood plasma (at protein level).

It localises to the secreted. The enzyme catalyses a sterol + a 1,2-diacyl-sn-glycero-3-phosphocholine = a sterol ester + a 1-acyl-sn-glycero-3-phosphocholine. It carries out the reaction a 1-O-alkyl-2-acetyl-sn-glycero-3-phosphocholine + H2O = a 1-O-alkyl-sn-glycero-3-phosphocholine + acetate + H(+). The catalysed reaction is a 1-hexadecanoyl-2-acyl-sn-glycero-3-phosphocholine + (24S)-hydroxycholesterol = (24S)-24-hydroxycholesterol ester + 1-hexadecanoyl-sn-glycero-3-phosphocholine. It catalyses the reaction (24S)-hydroxycholesterol + 1-hexadecanoyl-2-(9Z,12Z-octadecadienoyl)-sn-glycero-3-phosphocholine = (24S)-hydroxycholesterol 3-linoleoate + 1-hexadecanoyl-sn-glycero-3-phosphocholine. The enzyme catalyses 1-hexadecanoyl-2-(5Z,8Z,11Z,14Z-eicosatetraenoyl)-sn-glycero-3-phosphocholine + cholesterol = cholesteryl (5Z,8Z,11Z,14Z)-eicosatetraenoate + 1-hexadecanoyl-sn-glycero-3-phosphocholine. It carries out the reaction 1-hexadecanoyl-2-(9Z-octadecenoyl)-sn-glycero-3-phosphocholine + cholesterol = cholesteryl (9Z-octadecenoate) + 1-hexadecanoyl-sn-glycero-3-phosphocholine. The catalysed reaction is 1-hexadecanoyl-2-(8Z,11Z,14Z-eicosatrienoyl)-sn-glycero-3-phosphocholine + cholesterol = cholesteryl (8Z,11Z,14Z)-eicosatrienoate + 1-hexadecanoyl-sn-glycero-3-phosphocholine. It catalyses the reaction 1-hexadecanoyl-2-(5Z,8Z,11Z-eicosatrienoyl)-sn-glycero-3-phosphocholine + cholesterol = cholesteryl (5Z,8Z,11Z)-eicosatrienoate + 1-hexadecanoyl-sn-glycero-3-phosphocholine. The enzyme catalyses 1-hexadecanoyl-2-(5Z,8Z,11Z,14Z,17Z-eicosapentaenoyl)-sn-glycero-3-phosphocholine + cholesterol = (5Z,8Z,11Z,14Z,17Z-eicosapentaenoyl)-cholesterol + 1-hexadecanoyl-sn-glycero-3-phosphocholine. It carries out the reaction 1-hexadecanoyl-2-(9Z,12Z-octadecadienoyl)-sn-glycero-3-phosphocholine + cholesterol = cholesteryl (9Z,12Z)-octadecadienoate + 1-hexadecanoyl-sn-glycero-3-phosphocholine. The catalysed reaction is 1-hexadecanoyl-2-(6Z,9Z,12Z-octadecatrienoyl)-sn-glycero-3-phosphocholine + cholesterol = (6Z,9Z,12Z-octadecatrienoyl)-cholesterol + 1-hexadecanoyl-sn-glycero-3-phosphocholine. It catalyses the reaction 1-hexadecanoyl-2-(11Z,14Z,17Z-eicosatrienoyl)-sn-glycero-3-phosphocholine + cholesterol = (11Z,14Z,17Z-eicosatrienoyl)-cholesterol + 1-hexadecanoyl-sn-glycero-3-phosphocholine. The enzyme catalyses 1-hexadecanoyl-2-(9Z,12Z,15Z-octadecatrienoyl)-sn-glycero-3-phosphocholine + cholesterol = (9Z,12Z,15Z-octadecatrienoyl)-cholesterol + 1-hexadecanoyl-sn-glycero-3-phosphocholine. It carries out the reaction 1-hexadecanoyl-2-(9Z,12Z-octadecadienoyl)-sn-glycero-3-phosphocholine + H2O = (9Z,12Z)-octadecadienoate + 1-hexadecanoyl-sn-glycero-3-phosphocholine + H(+). The catalysed reaction is 1-hexadecanoyl-2-(5Z,8Z,11Z,14Z-eicosatetraenoyl)-sn-glycero-3-phosphocholine + H2O = 1-hexadecanoyl-sn-glycero-3-phosphocholine + (5Z,8Z,11Z,14Z)-eicosatetraenoate + H(+). It catalyses the reaction a 1-O-alkyl-2-acetyl-sn-glycero-3-phosphocholine + 1-hexadecanoyl-sn-glycero-3-phosphocholine = 1-hexadecanoyl-2-acetyl-sn-glycero-3-phosphocholine + a 1-O-alkyl-sn-glycero-3-phosphocholine. Its function is as follows. Central enzyme in the extracellular metabolism of plasma lipoproteins. Synthesized mainly in the liver and secreted into plasma where it converts cholesterol and phosphatidylcholines (lecithins) to cholesteryl esters and lysophosphatidylcholines on the surface of high and low density lipoproteins (HDLs and LDLs). The cholesterol ester is then transported back to the liver. Also produced in the brain by primary astrocytes, and esterifies free cholesterol on nascent APOE-containing lipoproteins secreted from glia and influences cerebral spinal fluid (CSF) APOE- and APOA1 levels. Together with APOE and the cholesterol transporter ABCA1, plays a key role in the maturation of glial-derived, nascent lipoproteins. Required for remodeling high-density lipoprotein particles into their spherical forms. Has a preference for plasma 16:0-18:2 or 18:O-18:2 phosphatidylcholines. Catalyzes the hydrolysis of 1-O-alkyl-2-acetyl-sn-glycero-3-phosphocholine (platelet-activating factor or PAF) to 1-O-alkyl-sn-glycero-3-phosphocholine (lyso-PAF). Also catalyzes the transfer of the acetate group from PAF to 1-hexadecanoyl-sn-glycero-3-phosphocholine forming lyso-PAF. Catalyzes the esterification of (24S)-hydroxycholesterol (24(S)OH-C), also known as cerebrosterol to produce 24(S)OH-C monoesters. The protein is Phosphatidylcholine-sterol acyltransferase (LCAT) of Sus scrofa (Pig).